A 557-amino-acid chain; its full sequence is MRSDMIKKGFDKAPHRSLLKATGLKDEDFDKPFIAICNSFIEIIPGHKHLNEFGKLVKEAVRAAGMVPFEFNTIGVDDGIAMGHIGMRYSLPSREIIADSVETVVNAHWFDGMICIPNCDKITPGMMMAALRINIPTVFVSGGPMAAGKTSKGEVVDLSSVFEGVGAYQSGKISEEELKDIEDHGCPSCGSCSGMFTANSMNCLCEVLGLALPGNGSILAIDPRREELIKEAAEKLKVLIERDIKPRDIVTEEAIDDAFALDMAMGGSTNTVLHTLALAHEAGLDYDMSRIDAVSRRVPHLCKVSPASNWHMEDIDRAGGISAILKEMSRKEGVLHLDRITATGQTLRENIAHAEIKDKEVIHSLENPHSEEGGLRILKGNLAKDGAVIKSGATEVKRFEGPCVIFNSQDEALAGIMLGKVKKGDVVVIRYEGPRGGPGMPEMLAPTSAIAGMGLGADVALLTDGRFSGASRGISVGHISPEAAAGGTIALLEQGDIVCIDVEERLLEVRISDEELDKRKKEWKRPEPKVKTGWLGRYAQMVTSANTGAVLKVPNFD.

Asp78 serves as a coordination point for Mg(2+). Cys119 provides a ligand contact to [2Fe-2S] cluster. Mg(2+)-binding residues include Asp120 and Lys121. An N6-carboxylysine modification is found at Lys121. Residue Cys192 coordinates [2Fe-2S] cluster. Glu442 provides a ligand contact to Mg(2+). Ser468 serves as the catalytic Proton acceptor.

The protein belongs to the IlvD/Edd family. In terms of assembly, homodimer. [2Fe-2S] cluster serves as cofactor. Requires Mg(2+) as cofactor.

It catalyses the reaction (2R)-2,3-dihydroxy-3-methylbutanoate = 3-methyl-2-oxobutanoate + H2O. It carries out the reaction (2R,3R)-2,3-dihydroxy-3-methylpentanoate = (S)-3-methyl-2-oxopentanoate + H2O. The protein operates within amino-acid biosynthesis; L-isoleucine biosynthesis; L-isoleucine from 2-oxobutanoate: step 3/4. It functions in the pathway amino-acid biosynthesis; L-valine biosynthesis; L-valine from pyruvate: step 3/4. Functions in the biosynthesis of branched-chain amino acids. Catalyzes the dehydration of (2R,3R)-2,3-dihydroxy-3-methylpentanoate (2,3-dihydroxy-3-methylvalerate) into 2-oxo-3-methylpentanoate (2-oxo-3-methylvalerate) and of (2R)-2,3-dihydroxy-3-methylbutanoate (2,3-dihydroxyisovalerate) into 2-oxo-3-methylbutanoate (2-oxoisovalerate), the penultimate precursor to L-isoleucine and L-valine, respectively. This Bacillus cereus (strain AH187) protein is Dihydroxy-acid dehydratase.